The primary structure comprises 179 residues: uncharacterized protein (179 aa).

A compositionally biased stretch (low complexity) spans 26–39; it reads AAKLAAATTPTHTA. Residues 26–179 form a disordered region; sequence AAKLAAATTP…RPRRNTLRHM (154 aa). A compositionally biased stretch (polar residues) spans 150-165; that stretch reads RQSVTQSTAARQTQPH. Basic residues predominate over residues 167–179; sequence GRPRPRRNTLRHM.

This is an uncharacterized protein from Equus caballus (Horse).